The chain runs to 309 residues: Glutaminase (309 aa).

S65, N117, E162, N169, Y193, Y245, and V263 together coordinate substrate.

It belongs to the glutaminase family. Homotetramer.

The catalysed reaction is L-glutamine + H2O = L-glutamate + NH4(+). The polypeptide is Glutaminase (Bacillus cytotoxicus (strain DSM 22905 / CIP 110041 / 391-98 / NVH 391-98)).